The chain runs to 422 residues: MTVKTTVSTKDIDEAFLRLKDIVKETPLQLDHYLSQKYDCKVYLKREDLQWVRSFKLRGAYNAISVLSDEAKSKGITCASAGNHAQGVVYTAKKLNLNAVIFMPVTTPLQKVNQVKFFGNSNVEVVLTGDTFDHCLAEALTYTSEHQMNFIDPFNNVHTISGQGTLAKEMLEQSKSDNVNFDYLFAAIGGGGLISGISTYFKSYSPNTKIIGVEPSGASSMYESVVVNNQVITLPNIDKFVDGASVARVGDITFEIAKKNVDNYVQVDEGAVCSTILDMYSKQAIVAEPAGALSVSALENYKDHIKGKTVVCVISGGNNDINRMKEIEERSLLYEEMKHYFILNFPQRPGALREFVNDVLGPQDDITKFEYLKKSSQNTGTVIIGIQLKDHDDLIQLKQRVNHFDPSNIYINENKMLHSLLI.

An N6-(pyridoxal phosphate)lysine modification is found at K56. Residues N83, 189–193, and S315 contribute to the pyridoxal 5'-phosphate site; that span reads GGGGL. Residues 339–413 enclose the ACT-like domain; the sequence is HYFILNFPQR…FDPSNIYINE (75 aa).

It belongs to the serine/threonine dehydratase family. In terms of assembly, homotetramer. It depends on pyridoxal 5'-phosphate as a cofactor.

It catalyses the reaction L-threonine = 2-oxobutanoate + NH4(+). The protein operates within amino-acid biosynthesis; L-isoleucine biosynthesis; 2-oxobutanoate from L-threonine: step 1/1. Its function is as follows. Catalyzes the anaerobic formation of alpha-ketobutyrate and ammonia from threonine in a two-step reaction. The first step involved a dehydration of threonine and a production of enamine intermediates (aminocrotonate), which tautomerizes to its imine form (iminobutyrate). Both intermediates are unstable and short-lived. The second step is the nonenzymatic hydrolysis of the enamine/imine intermediates to form 2-ketobutyrate and free ammonia. In the low water environment of the cell, the second step is accelerated by RidA. This is L-threonine dehydratase biosynthetic IlvA (ilvA) from Staphylococcus aureus (strain bovine RF122 / ET3-1).